The primary structure comprises 254 residues: Alcohol dehydrogenase (254 aa).

10–33 (FVAGLGGIGLDTSREIVKSGPKNL) lines the NAD(+) pocket. Position 138 (Ser-138) interacts with substrate. Residue Tyr-151 is the Proton acceptor of the active site.

Belongs to the short-chain dehydrogenases/reductases (SDR) family. Homodimer.

It carries out the reaction a primary alcohol + NAD(+) = an aldehyde + NADH + H(+). The enzyme catalyses a secondary alcohol + NAD(+) = a ketone + NADH + H(+). This Drosophila hawaiiensis (Fruit fly) protein is Alcohol dehydrogenase (Adh).